We begin with the raw amino-acid sequence, 581 residues long: MAIDFSQYQTPGVYTEAVGAPQLGIRSSVPTAVAIFGTAVGYQTYRESIRINPDTGETITTQILALVGEPTGGSFKLSLAGEPTGNIPFNATQGQVQSALRALPNVEDDEVTVLGDPGGPWTVTFTKAVAALTKDVTGLTGGDNPDLNIASEQTGVPAMNRALAKKGIKTDTIRVVNPNSGQVYVLGTDYVVTRVNAGEDGEANTRDDLYTIQRVVDGGHIDPGDIVQLSYRYTDPNYHEVIRFTDPDDIQDFYGPAFDEAGNVQSEITLCAQLAITNGASTILACAVDPEGDTVTMGDYQNALNKFRDEDEIAIIVAGTGAQPIQALVQQHVSAQSNNKYERRAILGMDGSVTPVPSATRIANAQSIKDQRVALISPSSFVYYAPELNREVVLGGQFMAAAVAGKSVSAIAAMPLTRKVIRGFSGPAEVQRDGEKSRESSEGLMVIEKTPRNLVHVRHGVTTDPTSLHTREWNIIGQQDVMVYRIRDYLDADGLIGMPIYDTTIVQVKASAEAALVWLVDNNIIRGYRNLKARQIERQPDVIEVRYEWRPAYPLNYIVVRYSIAPETGDITSTIEGTTSF.

This sequence belongs to the myoviridae tail sheath protein family. In terms of assembly, homomultimer.

It localises to the virion. The protein localises to the host cytoplasm. Its function is as follows. Polymerizes as an extended structure around the baseplate-tail tube complex. During ejection, the sheath shifts to a contracted form, thereby making the inner tail tube protrude through the host cell envelope. The chain is Tail sheath protein from Mycobacterium phage Bxz1 (Mycobacteriophage Bxz1).